Consider the following 90-residue polypeptide: Co-chaperonin GroES (90 aa).

It belongs to the GroES chaperonin family. As to quaternary structure, heptamer of 7 subunits arranged in a ring. Interacts with the chaperonin GroEL.

The protein localises to the cytoplasm. Functionally, together with the chaperonin GroEL, plays an essential role in assisting protein folding. The GroEL-GroES system forms a nano-cage that allows encapsulation of the non-native substrate proteins and provides a physical environment optimized to promote and accelerate protein folding. GroES binds to the apical surface of the GroEL ring, thereby capping the opening of the GroEL channel. The sequence is that of Co-chaperonin GroES from Fusobacterium nucleatum subsp. nucleatum (strain ATCC 25586 / DSM 15643 / BCRC 10681 / CIP 101130 / JCM 8532 / KCTC 2640 / LMG 13131 / VPI 4355).